The chain runs to 2529 residues: MSYPFGKEETATEEELFEFFCECLRRGDWELAQACVPQLHRGQGEIPQKVEDILQALVQCPILLRCGPDINPQRLAWLWLLVLEKWLAPEKKLLSTAIRRKLEFLFLSEDLQGDIPETILKELFETLAQGPAGSIPDRRTPQLSPEAVSVLWNLLKQAPRPAQALLELLLEDHHSASLCPSPLQKSLLDLIREALQTLRDPASQPPGVADAVCGALQALCCKAELPESEWRVLCEELLETCRTEDSPLQEERLLGCLLHKAGRNLLSLYGHTYAEKVAERPPKATLSGKDHPDPERAMLALFSTPDPAHAWKMAFFYCLSNNKHFLEQILVTALTLLKEEDFPSLGYLLDREFRPLSHLLVLLGWTHCQSLESAKRLLQTLYRTQDQGHDELLRDACEGLWAHLEVLEWCVQQSSNLIPKRELLCHLHGGDSHSVLYSLHHLTNLPALNEEEVLKLLQKEPTKDLQGEHETHDASVPEHLSQCQSLTLYQGFCAMKYAVYALCVNSHQHSQCQDCRDSASEDLALVEPGSDSLPSPGASHLFPTYLARCRQYLHSIPASLCLEILENIFSLLLITSADLHPEPHLPEDYAEDEDIEGKGPLGLRSPSESPQHIAATERRSERASMGPRNPAHTVPGCPKAEPKDSSPGPHKHSFLDLKHFTSGVNGFLADEFAMGAFLSLLQEQLTEISSHRTPEETKLPEDQSCSAARDGLQSRLHRFSKVLSEAQWRYKVVTSNQGSEEQPSRRYRPIATRHSSLRRGRRTRRTRADGRERGSNPSLEGTSSELSTSTSEGSLSAVSGQVESDSRFQTQPQSSIIPMMFSTPESLLASCILRGNFAEAHQVVLMFNLKSSPIAGELMFVERYQEVIQELARVEHKIENQNSDGGNNTIRRTGSGRSTLQAIGSAAAAGMVFYSISDVTEKLLSPSEDPIPTLQEDFWINATPMETTTPLREVLEDLSPPAMAAFDLACCQCQLWKTCKQLLETAERRLSSSLESRGRRLDQVVLNPDGMRGFPFVLQQISKILSYPLMQTGLAKSETLEERGGGAPRSSISELLQMCWPSLTEDCVASHTSLSQQLEQALQSLREALALPESKSTPLSCLVEQAAQKAPEAEAHPVHIQSQLLQKTLGRQTPAGHRQTDYVGAFFSYCSSLAAVLLRSLSSDPDHVEVRVGNPFVLLQQSSSQLVSHLLLERQVPPDRLAALLAQEHLNLSVPQVIVSCCCEPLTLCLSRQSQQASSLLTHLGMLAREHASHLLDGLPLSTLGSPRPSENPSAERKSHSSPKDSLPAFTASALAFLKSRSKILAMVACLRTSRGTKVSKPGLSWKELRGRREAPLTAEKVAQECEHLLEQFPVFEAALLANWEPLQQASEPKQSLAASLCGQANLSTVLLGLHSSLALDILTEAFEGALVARDWPRALQLIDVYGQDLDDLSIVQDSVLTCAAVCDKEGWQYLFPVKDASLRSQLALRFVDKWPLESCLEILAYCVSDMAVQEELKSELQRKLMELRVYQKILGLQDPPVWCDWQTLRSCCAEDPSAVMDMMLDSQEYELCEEWGRLYPIPREHLVSLHHKHLLHLLERSEHDKALQLLQRIPDPTMCLEVTERSLDQHPSLATSHFLANYLTSHFYGELTTDRHREIQALYMGSKVLLTLPEQHRASYARLSSSPLLMLEQLLMNMKVDWATTAVQTLHQLLAGQDIGFTLDEVDSLLSRYAGKALDLPYPLREKRSDSMIHLQEPVHQASDSETLSRSSSAEFSAAAAPGSALVRSPSPKERAFPQTQPPVEFVPPETPPARDQWVPDETESVCMVCCREHFTMFNRRHHCRRCGRLVCGSCSTKKMVVEGFRENPTRVCDQCYSYYNKDTPEESPCQSEVPDSAKNESPPYSAVVRVPKATEVEWILSLSEEENELVRSEFYYEQAPSASLCIAILNLHRDSIACGHQLIEHCCRLSRGLTNPEVDAGLLIDIMKQLLFSAKMMFVKAGQSQDLALCDSYISKVDVLHLLVAAAYRHVPSLDQILQPAAVTRLRNQLLEAEYYQLGVEVSTKTGLDSTGAWHAWGMACLKAGNLTVAREKFTRCLKPPLDLNQLSHGSRLVQDVVEYLESTVRPLVSLQDDDYFATLRELEATLRTQSLLLEAIPEGKIMNNTYYQECLFYLHNYSTNLAIISFYMRHNCLREALLHLLNKESPPEVFIEGIFQPSYKSGKLHTLENLLESIDPTLESWGAHLIAACQHLQKNSYYHILYELQQFMKDQVRAAMTCIRFFSHKAKSYTELGEKLSWLLKAKDHLKIYLQETSRSSGRKKATFFRKKMTAADVSRHMNTLQLQMEVTRFLHRCESAGTSQVTTLPLPTLFGNNHMKMEVACKVMLGGKNVEDGFGIAFRVLQDFQLDAAATYCRAARQLVEREKYGEIRQLLKCVSESGMAAKSDGDTILLNCLEAFKRIPPQELEGLIQAIHSDDNKVRAYLTCCKLRSAYLIAVKQEHSQAAALVQQVQQAAKSSGDSVVQDICAQWLLTSHSRGAHGSGSRK.

Disordered regions lie at residues 584–650 (HLPE…PGPH), 689–709 (SSHR…SAAR), and 733–810 (VTSN…RFQT). 2 positions are modified to phosphoserine: Ser605 and Ser609. The span at 689-701 (SSHRTPEETKLPE) shows a compositional bias: basic and acidic residues. Basic residues predominate over residues 755–765 (SSLRRGRRTRR). A compositionally biased stretch (low complexity) spans 778–796 (SLEGTSSELSTSTSEGSLS). Ser791 is subject to Phosphoserine. Residues 797–810 (AVSGQVESDSRFQT) show a composition bias toward polar residues. A coiled-coil region spans residues 859 to 884 (MFVERYQEVIQELARVEHKIENQNSD). Residues 1258 to 1286 (GLPLSTLGSPRPSENPSAERKSHSSPKDS) form a disordered region. Positions 1263–1273 (TLGSPRPSENP) are enriched in polar residues. A compositionally biased stretch (basic and acidic residues) spans 1274–1283 (SAERKSHSSP). Residues 1488–1515 (VSDMAVQEELKSELQRKLMELRVYQKIL) adopt a coiled-coil conformation. Ser1732, Ser1754, Ser1770, and Ser1772 each carry phosphoserine. Residues 1762–1799 (APGSALVRSPSPKERAFPQTQPPVEFVPPETPPARDQW) form a disordered region. An FYVE-type zinc finger spans residues 1802–1862 (DETESVCMVC…VCDQCYSYYN (61 aa)). 8 residues coordinate Zn(2+): Cys1808, Cys1811, Cys1825, Cys1828, Cys1833, Cys1836, Cys1854, and Cys1857. Residues 1865–1884 (TPEESPCQSEVPDSAKNESP) are disordered.

It belongs to the ZFYVE26 family. As to quaternary structure, interacts with AP5Z1, AP5B1, AP5S1 and SPG11. Interacts with TTC19 and KIF13A.

It is found in the cytoplasm. The protein resides in the cytoskeleton. The protein localises to the microtubule organizing center. Its subcellular location is the centrosome. It localises to the midbody. Functionally, phosphatidylinositol 3-phosphate-binding protein required for the abscission step in cytokinesis: recruited to the midbody during cytokinesis and acts as a regulator of abscission. May also be required for efficient homologous recombination DNA double-strand break repair. This chain is Zinc finger FYVE domain-containing protein 26 (Zfyve26), found in Mus musculus (Mouse).